Reading from the N-terminus, the 364-residue chain is S-adenosylmethionine:tRNA ribosyltransferase-isomerase (364 aa).

The tract at residues 344-364 is disordered; that stretch reads ASDKMQETSGRGERPRFDHEI.

The protein belongs to the QueA family. Monomer.

The protein resides in the cytoplasm. It catalyses the reaction 7-aminomethyl-7-carbaguanosine(34) in tRNA + S-adenosyl-L-methionine = epoxyqueuosine(34) in tRNA + adenine + L-methionine + 2 H(+). It functions in the pathway tRNA modification; tRNA-queuosine biosynthesis. Functionally, transfers and isomerizes the ribose moiety from AdoMet to the 7-aminomethyl group of 7-deazaguanine (preQ1-tRNA) to give epoxyqueuosine (oQ-tRNA). In Thioalkalivibrio sulfidiphilus (strain HL-EbGR7), this protein is S-adenosylmethionine:tRNA ribosyltransferase-isomerase.